Here is a 154-residue protein sequence, read N- to C-terminus: Myoglobin (154 aa).

The Globin domain occupies 2–148 (GLSDGEWQIV…FRNDIAAKYK (147 aa)). Ser4 bears the Phosphoserine mark. Residue His65 participates in nitrite binding. His65 is a binding site for O2. Thr68 carries the phosphothreonine modification. His94 contributes to the heme b binding site.

Belongs to the globin family. In terms of assembly, monomeric.

The protein resides in the cytoplasm. The protein localises to the sarcoplasm. It catalyses the reaction Fe(III)-heme b-[protein] + nitric oxide + H2O = Fe(II)-heme b-[protein] + nitrite + 2 H(+). The enzyme catalyses H2O2 + AH2 = A + 2 H2O. In terms of biological role, monomeric heme protein which primary function is to store oxygen and facilitate its diffusion within muscle tissues. Reversibly binds oxygen through a pentacoordinated heme iron and enables its timely and efficient release as needed during periods of heightened demand. Depending on the oxidative conditions of tissues and cells, and in addition to its ability to bind oxygen, it also has a nitrite reductase activity whereby it regulates the production of bioactive nitric oxide. Under stress conditions, like hypoxia and anoxia, it also protects cells against reactive oxygen species thanks to its pseudoperoxidase activity. This is Myoglobin (MB) from Lycaon pictus (African wild dog).